The sequence spans 370 residues: NADH-quinone oxidoreductase subunit D 2 (370 aa).

The protein belongs to the complex I 49 kDa subunit family. In terms of assembly, NDH-1 is composed of 14 different subunits. Subunits NuoB, C, D, E, F, and G constitute the peripheral sector of the complex.

Its subcellular location is the cell membrane. The enzyme catalyses a quinone + NADH + 5 H(+)(in) = a quinol + NAD(+) + 4 H(+)(out). In terms of biological role, NDH-1 shuttles electrons from NADH, via FMN and iron-sulfur (Fe-S) centers, to quinones in the respiratory chain. The immediate electron acceptor for the enzyme in this species is believed to be ubiquinone. Couples the redox reaction to proton translocation (for every two electrons transferred, four hydrogen ions are translocated across the cytoplasmic membrane), and thus conserves the redox energy in a proton gradient. This chain is NADH-quinone oxidoreductase subunit D 2, found in Herpetosiphon aurantiacus (strain ATCC 23779 / DSM 785 / 114-95).